We begin with the raw amino-acid sequence, 500 residues long: L-arabinose isomerase (500 aa).

Glu306, Glu333, His350, and His450 together coordinate Mn(2+).

This sequence belongs to the arabinose isomerase family. Homohexamer. Mn(2+) is required as a cofactor.

The catalysed reaction is beta-L-arabinopyranose = L-ribulose. The protein operates within carbohydrate degradation; L-arabinose degradation via L-ribulose; D-xylulose 5-phosphate from L-arabinose (bacterial route): step 1/3. Functionally, catalyzes the conversion of L-arabinose to L-ribulose. This Shigella boydii serotype 18 (strain CDC 3083-94 / BS512) protein is L-arabinose isomerase.